A 521-amino-acid chain; its full sequence is Probable protein kinase UbiB (521 aa).

The Protein kinase domain maps to 119–497 (SFEREPVASA…QKLTNRLLQA (379 aa)). ATP-binding positions include 125–133 (VASASIAQV) and Lys-151. The Proton acceptor role is filled by Asp-286. A helical transmembrane segment spans residues 496 to 516 (QAIVSAGIGFVIALILLQLVV).

This sequence belongs to the ABC1 family. UbiB subfamily.

Its subcellular location is the cell inner membrane. Its pathway is cofactor biosynthesis; ubiquinone biosynthesis [regulation]. Functionally, is probably a protein kinase regulator of UbiI activity which is involved in aerobic coenzyme Q (ubiquinone) biosynthesis. This chain is Probable protein kinase UbiB, found in Delftia acidovorans (strain DSM 14801 / SPH-1).